We begin with the raw amino-acid sequence, 347 residues long: Peroxidase C2 (347 aa).

A signal peptide spans 1–24; it reads MHSSSSLIKLGFLLLLLNVSLSHA. 4 cysteine pairs are disulfide-bonded: Cys35/Cys115, Cys68/Cys73, Cys121/Cys325, and Cys201/Cys233. Residue His66 is the Proton acceptor of the active site. Ca(2+)-binding residues include Asp67, Val70, Gly72, Asp74, and Ser76. The N-linked (GlcNAc...) asparagine glycan is linked to Asn81. Pro163 contacts substrate. His194 is a heme b binding site. Thr195 provides a ligand contact to Ca(2+). N-linked (GlcNAc...) asparagine glycans are attached at residues Asn210 and Asn238. Ca(2+) is bound by residues Asp246, Thr249, and Asp254.

It belongs to the peroxidase family. Classical plant (class III) peroxidase subfamily. The cofactor is Ca(2+). Heme b is required as a cofactor.

It localises to the secreted. The protein resides in the vacuole. The catalysed reaction is 2 a phenolic donor + H2O2 = 2 a phenolic radical donor + 2 H2O. Its function is as follows. Removal of H(2)O(2), oxidation of toxic reductants, biosynthesis and degradation of lignin, suberization, auxin catabolism, response to environmental stresses such as wounding, pathogen attack and oxidative stress. These functions might be dependent on each isozyme/isoform in each plant tissue. The polypeptide is Peroxidase C2 (PRXC2) (Armoracia rusticana (Horseradish)).